Reading from the N-terminus, the 426-residue chain is Anaerobic glycerol-3-phosphate dehydrogenase subunit B (426 aa).

The protein belongs to the anaerobic G-3-P dehydrogenase subunit B family. As to quaternary structure, composed of a catalytic GlpA/B dimer and of membrane bound GlpC. The cofactor is FMN.

It carries out the reaction a quinone + sn-glycerol 3-phosphate = dihydroxyacetone phosphate + a quinol. It participates in polyol metabolism; glycerol degradation via glycerol kinase pathway; glycerone phosphate from sn-glycerol 3-phosphate (anaerobic route): step 1/1. Its function is as follows. Conversion of glycerol 3-phosphate to dihydroxyacetone. Uses fumarate or nitrate as electron acceptor. The polypeptide is Anaerobic glycerol-3-phosphate dehydrogenase subunit B (Haemophilus ducreyi (strain 35000HP / ATCC 700724)).